Consider the following 304-residue polypeptide: 2-oxoacid:ferredoxin oxidoreductase 2, subunit beta (304 aa).

Cysteine 12, cysteine 15, and cysteine 46 together coordinate [4Fe-4S] cluster. Thiamine diphosphate contacts are provided by residues 44–47 (IGCS) and histidine 65. Mg(2+) is bound at residue aspartate 90. 91–92 (GD) provides a ligand contact to thiamine diphosphate. Mg(2+)-binding residues include asparagine 118 and valine 120. 122-123 (GL) provides a ligand contact to thiamine diphosphate. Cysteine 197 is a [4Fe-4S] cluster binding site.

In terms of assembly, heterodimer composed of an alpha and a beta subunit. The cofactor is [4Fe-4S] cluster. Thiamine diphosphate serves as cofactor. It depends on Mg(2+) as a cofactor.

It catalyses the reaction a 2-oxocarboxylate + 2 oxidized [2Fe-2S]-[ferredoxin] + CoA = an acyl-CoA + 2 reduced [2Fe-2S]-[ferredoxin] + CO2 + H(+). Functionally, catalyzes the coenzyme A-dependent oxidative decarboxylation of different 2-oxoacids such as 2-oxoglutarate, pyruvate and 2-oxobutyrate to form their CoA derivatives. This Sulfurisphaera tokodaii (strain DSM 16993 / JCM 10545 / NBRC 100140 / 7) (Sulfolobus tokodaii) protein is 2-oxoacid:ferredoxin oxidoreductase 2, subunit beta.